We begin with the raw amino-acid sequence, 199 residues long: MKTLFFATSNINKINEVKQILDIPKIKIEIPQNFDIKETGKTFKENSLLKAKALFKILNNKQPVFSEDSGLCIEALNMEPGIYSKRYDQYKLGKKLDNNEKNHLIIDLMREQNNRTAYFICVISYIDVDGTINNFEGMLKGTIALNIDYYQKNGFGYNPIFLTTNNKRLSELNLEEKNKISHRGIAFDKFKKFLMQFLD.

A substrate-binding site is contributed by 8-13 (TSNINK). Residue Asp-68 is the Proton acceptor of the active site. Asp-68 contributes to the Mg(2+) binding site. Substrate contacts are provided by residues Ser-69, 155 to 158 (FGYN), Lys-177, and 182 to 183 (HR).

This sequence belongs to the HAM1 NTPase family. Homodimer. It depends on Mg(2+) as a cofactor.

The enzyme catalyses XTP + H2O = XMP + diphosphate + H(+). The catalysed reaction is dITP + H2O = dIMP + diphosphate + H(+). It catalyses the reaction ITP + H2O = IMP + diphosphate + H(+). Its function is as follows. Pyrophosphatase that catalyzes the hydrolysis of nucleoside triphosphates to their monophosphate derivatives, with a high preference for the non-canonical purine nucleotides XTP (xanthosine triphosphate), dITP (deoxyinosine triphosphate) and ITP. Seems to function as a house-cleaning enzyme that removes non-canonical purine nucleotides from the nucleotide pool, thus preventing their incorporation into DNA/RNA and avoiding chromosomal lesions. The sequence is that of dITP/XTP pyrophosphatase from Borrelia recurrentis (strain A1).